We begin with the raw amino-acid sequence, 151 residues long: Cytochrome c-type biogenesis protein CcmE (151 aa).

At 1-8 the chain is on the cytoplasmic side; the sequence is MNPLRKKR. A helical; Signal-anchor for type II membrane protein membrane pass occupies residues 9–29; that stretch reads LLIILAILVGVGIAVGLALSA. The Periplasmic portion of the chain corresponds to 30 to 151; sequence LKENINLFYT…QSAPTPAKEG (122 aa). His124 and Tyr128 together coordinate heme. The tract at residues 131 to 151 is disordered; the sequence is PEVTKALKDSGQSAPTPAKEG.

Belongs to the CcmE/CycJ family.

It localises to the cell inner membrane. Its function is as follows. Heme chaperone required for the biogenesis of c-type cytochromes. Transiently binds heme delivered by CcmC and transfers the heme to apo-cytochromes in a process facilitated by CcmF and CcmH. This chain is Cytochrome c-type biogenesis protein CcmE, found in Pseudomonas fluorescens (strain ATCC BAA-477 / NRRL B-23932 / Pf-5).